Reading from the N-terminus, the 257-residue chain is DNA repair protein RecO (257 aa).

It belongs to the RecO family.

Its function is as follows. Involved in DNA repair and RecF pathway recombination. The polypeptide is DNA repair protein RecO (Synechococcus sp. (strain CC9605)).